The following is a 392-amino-acid chain: Odorant receptor 9a (392 aa).

The Cytoplasmic portion of the chain corresponds to 1–41 (MSDKVKGKKQEEKDQSLRVQILVYRCMGIDLWSPTMANDRP). A helical membrane pass occupies residues 42 to 62 (WLTFVTMGPLFLFMVPMFLAA). The Extracellular segment spans residues 63-74 (HEYITQVSLLSD). A helical transmembrane segment spans residues 75–95 (TLGSTFASMLTLVKFLLFCYH). Residues 96 to 141 (RKEFVGLIYHIRAILAKEIEVWPDAREIIEVENQSDQMLSLTYTRC) lie on the Cytoplasmic side of the membrane. Residues 142–162 (FGLAGIFAALKPFVGIILSSI) form a helical membrane-spanning segment. Residues 163–202 (RGDEIHLELPHNGVYPYDLQVVMFYVPTYLWNVMASYSAV) are Extracellular-facing. Residues 203-223 (TMALCVDSLLFFFTYNVCAIF) form a helical membrane-spanning segment. Residues 224-268 (KIAKHRMIHLPAVGGKEELEGLVQVLLLHQKGLQIADHIADKYRP) are Cytoplasmic-facing. Residues 269-289 (LIFLQFFLSALQICFIGFQVA) traverse the membrane as a helical segment. Residues 290-297 (DLFPNPQS) lie on the Extracellular side of the membrane. The chain crosses the membrane as a helical span at residues 298-318 (LYFIAFVGSLLIALFIYSKCG). The Cytoplasmic segment spans residues 319 to 362 (ENIKSASLDFGNGLYETNWTDFSPPTKRALLIAAMRAQRPCQMK). Residues 363–383 (GYFFEASMATFSTIVRSAVSY) traverse the membrane as a helical segment. The Extracellular segment spans residues 384–392 (IMMLRSFNA).

Belongs to the insect chemoreceptor superfamily. Heteromeric odorant receptor channel (TC 1.A.69) family. Or1a subfamily. In terms of assembly, interacts with Orco. Complexes exist early in the endomembrane system in olfactory sensory neurons (OSNs), coupling these complexes to the conserved ciliary trafficking pathway. As to expression, expressed in olfactory sensory neurons in the antenna.

It localises to the cell membrane. Functionally, odorant receptor which mediates acceptance or avoidance behavior, depending on its substrates. The odorant receptor repertoire encodes a large collection of odor stimuli that vary widely in identity, intensity, and duration. May form a complex with Orco to form odorant-sensing units, providing sensitive and prolonged odorant signaling and calcium permeability. The sequence is that of Odorant receptor 9a (Or9a) from Drosophila melanogaster (Fruit fly).